Here is a 295-residue protein sequence, read N- to C-terminus: MLQGPGSLLLLFLASHCCLGSARGLFLFGQPDFSYKRSNCKPIPANLQLCHGIEYQNMRLPNLLGHETMKEVLEQAGAWIPLVMKQCHPDTKKFLCSLFAPVCLDDLDETIQPCHSLCVQVKDRCAPVMSAFGFPWPDMLECDRFPQDNDLCIPLASSDHLLPATEEAPKVCEACKNKNDDDNDIMETLCKNDFALKIKVKEITYINRDTKIILETKSKTIYKLNGVSERDLKKSVLWLKDSLQCTCEEMNDINAPYLVMGQKQGGELVITSVKRWQKGQREFKRISRSIRKLQC.

Positions 1 to 24 (MLQGPGSLLLLFLASHCCLGSARG) are cleaved as a signal peptide. Residues 35-155 (YKRSNCKPIP…PQDNDLCIPL (121 aa)) enclose the FZ domain. Disulfide bonds link cysteine 40/cysteine 103, cysteine 50/cysteine 96, cysteine 87/cysteine 125, cysteine 114/cysteine 152, cysteine 118/cysteine 142, cysteine 172/cysteine 245, cysteine 175/cysteine 247, and cysteine 190/cysteine 295. An NTR domain is found at 172–295 (CEACKNKNDD…ISRSIRKLQC (124 aa)).

The protein belongs to the secreted frizzled-related protein (sFRP) family. As to expression, expressed in adipose tissue, heart, brain, skeletal muscle, pancreas, thymus, prostate, testis, ovary, small intestine and colon. Highest levels in adipose tissue, small intestine and colon.

The protein resides in the secreted. Soluble frizzled-related proteins (sFRPS) function as modulators of Wnt signaling through direct interaction with Wnts. They have a role in regulating cell growth and differentiation in specific cell types. SFRP2 may be important for eye retinal development and for myogenesis. This chain is Secreted frizzled-related protein 2 (SFRP2), found in Homo sapiens (Human).